Reading from the N-terminus, the 578-residue chain is Telomere repeat-binding protein 1 (578 aa).

Positions 293–372 (VKLRIKSFRV…HLDSLDFSLE (80 aa)) constitute a Ubiquitin-like domain. Residues 440 to 467 (ELSSQSQPPSRKSRRSEQQQQQAAQRRI) are disordered. The HTH myb-type domain maps to 463–522 (AQRRIRRPFSVAEVEALVQAVEKLGTGRWRDVKLCAFEDADHRTYVDLKDKWKTLVHTAK). Interaction with DNA regions lie at residues 465 to 469 (RRIRR), 511 to 515 (KDKWK), and 522 to 529 (KISPQQRR). Positions 491 to 518 (WRDVKLCAFEDADHRTYVDLKDKWKTLV) form a DNA-binding region, H-T-H motif.

As to quaternary structure, homodimer and heterodimer with TRP2 and TRP3. Interacts with KU70. As to expression, expressed ubiquitously. Highest expression in flowers and leaves.

It is found in the nucleus. Functionally, binds specifically to the plant telomeric double-stranded DNA sequences 5'-GGTTTAG-3'. At least 4 repeats of telomeric sequences are required for binding. Induces DNA bending. This chain is Telomere repeat-binding protein 1 (TRP1), found in Arabidopsis thaliana (Mouse-ear cress).